We begin with the raw amino-acid sequence, 142 residues long: Large ribosomal subunit protein uL13 (142 aa).

It belongs to the universal ribosomal protein uL13 family. Part of the 50S ribosomal subunit.

This protein is one of the early assembly proteins of the 50S ribosomal subunit, although it is not seen to bind rRNA by itself. It is important during the early stages of 50S assembly. The polypeptide is Large ribosomal subunit protein uL13 (Shewanella baltica (strain OS185)).